The following is a 141-amino-acid chain: Putative pre-16S rRNA nuclease (141 aa).

Belongs to the YqgF nuclease family.

Its subcellular location is the cytoplasm. Its function is as follows. Could be a nuclease involved in processing of the 5'-end of pre-16S rRNA. The polypeptide is Putative pre-16S rRNA nuclease (Roseiflexus sp. (strain RS-1)).